The sequence spans 168 residues: Small ribosomal subunit protein uS5 (168 aa).

In terms of domain architecture, S5 DRBM spans 17–80; that stretch reads IEDQLVAVNR…EDGKKKMINV (64 aa).

It belongs to the universal ribosomal protein uS5 family. In terms of assembly, part of the 30S ribosomal subunit. Contacts proteins S4 and S8.

In terms of biological role, with S4 and S12 plays an important role in translational accuracy. Functionally, located at the back of the 30S subunit body where it stabilizes the conformation of the head with respect to the body. This Lactobacillus acidophilus (strain ATCC 700396 / NCK56 / N2 / NCFM) protein is Small ribosomal subunit protein uS5.